Reading from the N-terminus, the 521-residue chain is Organic cation/carnitine transporter 6 (521 aa).

The Cytoplasmic portion of the chain corresponds to 1-37; the sequence is MADPISEPLLSHLTDDSGVNEKTRLEALTFDKIVEQS. The chain crosses the membrane as a helical span at residues 38–58; sequence LSDFGFWQFFQISLVGLALLF. The Extracellular segment spans residues 59-123; the sequence is DAQQIFITVY…GLECSSSLLR (65 aa). N-linked (GlcNAc...) asparagine glycosylation is present at Asn79. The chain crosses the membrane as a helical span at residues 124–144; it reads GMPSSAFYIGAIVGGFFLALI. Residues 145-154 lie on the Cytoplasmic side of the membrane; sequence PDDSLGRKKL. The chain crosses the membrane as a helical span at residues 155–177; that stretch reads VLFSTFAMSITSISVIFSTNVWI. Residues 178–182 are Extracellular-facing; that stretch reads YTFLK. The chain crosses the membrane as a helical span at residues 183-200; sequence FIIGFSRSQTWSYALVLI. Residue 200-207 participates in ATP binding; sequence ISERVSTR. Over 201–213 the chain is Cytoplasmic; it reads SERVSTRWRPRAT. The chain crosses the membrane as a helical span at residues 214 to 234; sequence MIPFTLFVLGFMSLSGIAFLA. The Extracellular segment spans residues 235 to 241; sequence QDSSWRY. A helical transmembrane segment spans residues 242–262; the sequence is LYLYTSVPAVFYCIFLYLFAL. Residues 263–326 are Cytoplasmic-facing; it reads ESPRWLHMQG…FFFRKWAFRR (64 aa). The helical transmembrane segment at 327–347 threads the bilayer; that stretch reads ILVVMIIMFGLGISYYGVPLA. At 348–356 the chain is on the extracellular side; it reads ARDIDVNIY. The chain crosses the membrane as a helical span at residues 357-377; that stretch reads LSETLNALVELPTFVITPILL. The Cytoplasmic segment spans residues 378–385; it reads ERFNRRSS. The helical transmembrane segment at 386-406 threads the bilayer; the sequence is VLVNTLLGGASGVLCFVLSIL. The Extracellular segment spans residues 407–412; sequence GKTEIA. Residues 413–433 form a helical membrane-spanning segment; sequence FAFELGTFFCARIGFNLMAVF. Residues 434 to 447 are Cytoplasmic-facing; the sequence is MVEMFPTCVRSSAT. The chain crosses the membrane as a helical span at residues 448 to 468; sequence MMFRQALVVGGACCPLIASIG. Over 469 to 473 the chain is Extracellular; sequence RYIPS. The helical transmembrane segment at 474-494 threads the bilayer; that stretch reads VSFAIFGIAMSGLGMFVLILP. Residues 495–521 lie on the Cytoplasmic side of the membrane; the sequence is ETKGLSLCDSMEEQEKRDQAVNTSHVC.

It belongs to the major facilitator (TC 2.A.1) superfamily. Organic cation transporter (TC 2.A.1.19) family. Expressed in roots and stems. In the stem of secondary inflorescences, localized to the phloem. Also present in flowers, specifically in the stamen, in the filaments and the connective, and restricted to major veins in leaves.

Its subcellular location is the vacuole membrane. In terms of biological role, high affinity carnitine transporter involved in the active cellular uptake of carnitine. Also transports organic cations. The polypeptide is Organic cation/carnitine transporter 6 (OCT6) (Arabidopsis thaliana (Mouse-ear cress)).